Reading from the N-terminus, the 332-residue chain is Methionine synthase (332 aa).

Zn(2+) contacts are provided by H211, C213, and C296.

The protein belongs to the archaeal MetE family. Requires Zn(2+) as cofactor.

It participates in amino-acid biosynthesis; L-methionine biosynthesis via de novo pathway. In terms of biological role, catalyzes the transfer of a methyl group to L-homocysteine resulting in methionine formation. The physiological methyl donor is unknown. The chain is Methionine synthase from Saccharolobus islandicus (strain Y.G.57.14 / Yellowstone #1) (Sulfolobus islandicus).